We begin with the raw amino-acid sequence, 141 residues long: Hemoglobin subunit alpha (141 aa).

The Globin domain occupies 1-141 (VLSPDDKKHV…VSTVLTSKYR (141 aa)). At S3 the chain carries Phosphoserine. K7 and K11 each carry N6-succinyllysine. Position 16 is an N6-acetyllysine; alternate (K16). The residue at position 16 (K16) is an N6-succinyllysine; alternate. At Y24 the chain carries Phosphotyrosine. S35 is modified (phosphoserine). At K40 the chain carries N6-succinyllysine. S49 bears the Phosphoserine mark. O2 is bound at residue H58. H87 lines the heme b pocket. A Phosphoserine modification is found at S102. At T108 the chain carries Phosphothreonine. S124 and S131 each carry phosphoserine. A phosphothreonine mark is found at T134 and T137. A Phosphoserine modification is found at S138.

The protein belongs to the globin family. In terms of assembly, heterotetramer of two alpha chains and two beta chains. In terms of tissue distribution, red blood cells.

Involved in oxygen transport from the lung to the various peripheral tissues. In terms of biological role, hemopressin acts as an antagonist peptide of the cannabinoid receptor CNR1. Hemopressin-binding efficiently blocks cannabinoid receptor CNR1 and subsequent signaling. This chain is Hemoglobin subunit alpha (HBA), found in Cercocebus atys (Sooty mangabey).